The following is a 141-amino-acid chain: Vesicle-associated membrane protein 4 (141 aa).

The tract at residues 1–51 is disordered; the sequence is MPPKFKRHLNDDDVTGSVKSERRNLLEDDSDEEEDFFLRGPSGPRFGPRND. Residues 1 to 115 are Cytoplasmic-facing; sequence MPPKFKRHLN…RRQMWWRGCK (115 aa). Residues Ser-17 and Ser-30 each carry the phosphoserine modification. Residues 52-112 enclose the v-SNARE coiled-coil homology domain; it reads KIKHVQNQVD…KQLRRQMWWR (61 aa). The chain crosses the membrane as a helical; Anchor for type IV membrane protein span at residues 116 to 136; sequence IKAIMALVAAILLLVIIILIV. At 137–141 the chain is on the vesicular side; the sequence is MKYRT.

It belongs to the synaptobrevin family. As to quaternary structure, identified in a complex containing STX6, STX12, VAMP4 and VTI1A. Interacts with BAIAP3; this interaction is increased in the presence of calcium.

Its subcellular location is the golgi apparatus. The protein localises to the trans-Golgi network membrane. Involved in the pathway that functions to remove an inhibitor (probably synaptotagmin-4) of calcium-triggered exocytosis during the maturation of secretory granules. May be a marker for this sorting pathway that is critical for remodeling the secretory response of granule. This Homo sapiens (Human) protein is Vesicle-associated membrane protein 4 (VAMP4).